Reading from the N-terminus, the 90-residue chain is Large ribosomal subunit protein bL27 (90 aa).

The disordered stretch occupies residues 1–20 (MAHKKAGGSSRNGRDSAGKR).

Belongs to the bacterial ribosomal protein bL27 family.

This chain is Large ribosomal subunit protein bL27, found in Rhodopseudomonas palustris (strain BisB18).